The primary structure comprises 90 residues: Small ribosomal subunit protein uS17 (90 aa).

This sequence belongs to the universal ribosomal protein uS17 family. Part of the 30S ribosomal subunit.

In terms of biological role, one of the primary rRNA binding proteins, it binds specifically to the 5'-end of 16S ribosomal RNA. The polypeptide is Small ribosomal subunit protein uS17 (Acidiphilium cryptum (strain JF-5)).